Consider the following 1011-residue polypeptide: Lysosomal alpha-mannosidase (1011 aa).

The first 49 residues, 1 to 49 (MGAYARASGVCARGCLDSAGPWTMSRALRPPLPPLCFFLLLLAAAGARA), serve as a signal peptide directing secretion. 2 disulfides stabilise this stretch: Cys55/Cys358 and Cys268/Cys273. His72 and Asp74 together coordinate Zn(2+). N-linked (GlcNAc...) asparagine glycosylation is present at Asn133. Asp196 provides a ligand contact to Zn(2+). Asp196 functions as the Nucleophile in the catalytic mechanism. Asn310 and Asn367 each carry an N-linked (GlcNAc...) asparagine glycan. 2 disulfide bridges follow: Cys412/Cys472 and Cys493/Cys501. A Zn(2+)-binding site is contributed by His446. 8 N-linked (GlcNAc...) asparagine glycosylation sites follow: Asn497, Asn645, Asn651, Asn692, Asn766, Asn832, Asn930, and Asn989.

The protein belongs to the glycosyl hydrolase 38 family. Zn(2+) is required as a cofactor. First processed into 3 peptides of 70 kDa, 42 kDa (D) and 13/15 kDa (E). The 70 kDa peptide is further processed into three peptides (A, B and C). The A, B and C peptides are disulfide-linked. Post-translationally, heavily glycosylated.

Its subcellular location is the lysosome. It carries out the reaction Hydrolysis of terminal, non-reducing alpha-D-mannose residues in alpha-D-mannosides.. Its function is as follows. Necessary for the catabolism of N-linked carbohydrates released during glycoprotein turnover. Cleaves all known types of alpha-mannosidic linkages. The protein is Lysosomal alpha-mannosidase (MAN2B1) of Homo sapiens (Human).